A 442-amino-acid polypeptide reads, in one-letter code: 4-hydroxyphenylpyruvate dioxygenase (442 aa).

2 VOC domains span residues 45 to 200 and 216 to 376; these read RFHH…GFEA and RLDH…IFTK. His-219, His-301, and Glu-387 together coordinate Fe cation.

This sequence belongs to the 4HPPD family. Fe cation is required as a cofactor.

Its subcellular location is the cytoplasm. The enzyme catalyses 3-(4-hydroxyphenyl)pyruvate + O2 = homogentisate + CO2. Its pathway is amino-acid degradation; L-phenylalanine degradation; acetoacetate and fumarate from L-phenylalanine: step 3/6. It functions in the pathway cofactor biosynthesis; prenylquinone biosynthesis. This Daucus carota (Wild carrot) protein is 4-hydroxyphenylpyruvate dioxygenase.